The following is a 466-amino-acid chain: Delta-1 crystallin (466 aa).

It belongs to the lyase 1 family. Argininosuccinate lyase subfamily. Homotetramer. In terms of tissue distribution, eye lens.

Functionally, delta crystallin, the principal crystallin in embryonic lens, is found only in birds and reptiles. This chain is Delta-1 crystallin (ASL1), found in Meleagris gallopavo (Wild turkey).